The primary structure comprises 190 residues: dCTP deaminase, dUMP-forming (190 aa).

DCTP contacts are provided by residues 101–106 (KSSLGR), Asp-119, 127–129 (TLE), Gln-148, Tyr-162, and Gln-174. Glu-129 (proton donor/acceptor) is an active-site residue. The segment at 163–190 (GSTRVGSKYQGQRGPTPSRSYQNFITST) is disordered. Over residues 171-190 (YQGQRGPTPSRSYQNFITST) the composition is skewed to polar residues.

This sequence belongs to the dCTP deaminase family. In terms of assembly, homotrimer.

The catalysed reaction is dCTP + 2 H2O = dUMP + NH4(+) + diphosphate. The protein operates within pyrimidine metabolism; dUMP biosynthesis; dUMP from dCTP: step 1/1. In terms of biological role, bifunctional enzyme that catalyzes both the deamination of dCTP to dUTP and the hydrolysis of dUTP to dUMP without releasing the toxic dUTP intermediate. In Mycolicibacterium paratuberculosis (strain ATCC BAA-968 / K-10) (Mycobacterium paratuberculosis), this protein is dCTP deaminase, dUMP-forming.